A 116-amino-acid chain; its full sequence is Large ribosomal subunit protein uL18 (116 aa).

The protein belongs to the universal ribosomal protein uL18 family. As to quaternary structure, part of the 50S ribosomal subunit; part of the 5S rRNA/L5/L18/L25 subcomplex. Contacts the 5S and 23S rRNAs.

In terms of biological role, this is one of the proteins that bind and probably mediate the attachment of the 5S RNA into the large ribosomal subunit, where it forms part of the central protuberance. The sequence is that of Large ribosomal subunit protein uL18 from Caulobacter vibrioides (strain ATCC 19089 / CIP 103742 / CB 15) (Caulobacter crescentus).